Consider the following 288-residue polypeptide: ATP synthase gamma chain (288 aa).

The protein belongs to the ATPase gamma chain family. In terms of assembly, F-type ATPases have 2 components, CF(1) - the catalytic core - and CF(0) - the membrane proton channel. CF(1) has five subunits: alpha(3), beta(3), gamma(1), delta(1), epsilon(1). CF(0) has three main subunits: a, b and c.

The protein localises to the cell inner membrane. In terms of biological role, produces ATP from ADP in the presence of a proton gradient across the membrane. The gamma chain is believed to be important in regulating ATPase activity and the flow of protons through the CF(0) complex. The polypeptide is ATP synthase gamma chain (Blochmanniella floridana).